We begin with the raw amino-acid sequence, 237 residues long: Demethylmenaquinone methyltransferase (237 aa).

Residues Thr62, Asp80, 102–103 (DA), and Ser119 contribute to the S-adenosyl-L-methionine site.

This sequence belongs to the class I-like SAM-binding methyltransferase superfamily. MenG/UbiE family.

The enzyme catalyses a 2-demethylmenaquinol + S-adenosyl-L-methionine = a menaquinol + S-adenosyl-L-homocysteine + H(+). It functions in the pathway quinol/quinone metabolism; menaquinone biosynthesis; menaquinol from 1,4-dihydroxy-2-naphthoate: step 2/2. Functionally, methyltransferase required for the conversion of demethylmenaquinol (DMKH2) to menaquinol (MKH2). The chain is Demethylmenaquinone methyltransferase from Renibacterium salmoninarum (strain ATCC 33209 / DSM 20767 / JCM 11484 / NBRC 15589 / NCIMB 2235).